The sequence spans 91 residues: Cytochrome b-c1 complex subunit 6, mitochondrial (91 aa).

A mitochondrion-targeting transit peptide spans 1-13; sequence MGLEDEQKMLTES. Positions 1–30 are disordered; that stretch reads MGLEDEQKMLTESGDPEEEEEEEEELVDPL. Acidic residues predominate over residues 14–27; it reads GDPEEEEEEEEELV. 2 disulfides stabilise this stretch: Cys37–Cys81 and Cys53–Cys67. N6-acetyllysine is present on Lys42. Lys85 is modified (N6-acetyllysine).

The protein belongs to the UQCRH/QCR6 family. Component of the ubiquinol-cytochrome c oxidoreductase (cytochrome b-c1 complex, complex III, CIII), a multisubunit enzyme composed of 11 subunits. The complex is composed of 3 respiratory subunits cytochrome b, cytochrome c1 and Rieske protein UQCRFS1, 2 core protein subunits UQCRC1/QCR1 and UQCRC2/QCR2, and 6 low-molecular weight protein subunits UQCRH/QCR6, UQCRB/QCR7, UQCRQ/QCR8, UQCR10/QCR9, UQCR11/QCR10 and subunit 9, the cleavage product of Rieske protein UQCRFS1. The complex exists as an obligatory dimer and forms supercomplexes (SCs) in the inner mitochondrial membrane with NADH-ubiquinone oxidoreductase (complex I, CI) and cytochrome c oxidase (complex IV, CIV), resulting in different assemblies (supercomplex SCI(1)III(2)IV(1) and megacomplex MCI(2)III(2)IV(2)).

Its subcellular location is the mitochondrion inner membrane. In terms of biological role, component of the ubiquinol-cytochrome c oxidoreductase, a multisubunit transmembrane complex that is part of the mitochondrial electron transport chain which drives oxidative phosphorylation. The respiratory chain contains 3 multisubunit complexes succinate dehydrogenase (complex II, CII), ubiquinol-cytochrome c oxidoreductase (cytochrome b-c1 complex, complex III, CIII) and cytochrome c oxidase (complex IV, CIV), that cooperate to transfer electrons derived from NADH and succinate to molecular oxygen, creating an electrochemical gradient over the inner membrane that drives transmembrane transport and the ATP synthase. The cytochrome b-c1 complex catalyzes electron transfer from ubiquinol to cytochrome c, linking this redox reaction to translocation of protons across the mitochondrial inner membrane, with protons being carried across the membrane as hydrogens on the quinol. In the process called Q cycle, 2 protons are consumed from the matrix, 4 protons are released into the intermembrane space and 2 electrons are passed to cytochrome c. This Homo sapiens (Human) protein is Cytochrome b-c1 complex subunit 6, mitochondrial (UQCRH).